The chain runs to 1024 residues: Gamma-tubulin complex component 5 (1024 aa).

Disordered stretches follow at residues 153–203 (IGLG…GGPQ), 523–545 (NEDK…SSRQ), and 853–873 (SQAK…GPPK). Basic and acidic residues predominate over residues 189–198 (TPLEEQDHNR). Residues 529-543 (DSASASSGSDQGPSS) show a composition bias toward low complexity. Over residues 853-864 (SQAKEDIPRDQD) the composition is skewed to basic and acidic residues.

This sequence belongs to the TUBGCP family. As to quaternary structure, component of the gamma-tubulin ring complex (gTuRC) consisting of TUBGCP2, TUBGCP3, TUBGCP4, TUBGCP5 and TUBGCP6 and gamma-tubulin TUBG1 or TUBG2. TUBGCP2, TUBGCP3, TUBGCP4, TUBGCP5 and TUBGCP6 assemble in a 5:5:2:1:1 stoichiometry; each is associated with a gamma-tubulin, thereby arranging 14 gamma-tubulins in a helical manner. Gamma-tubulin at the first position is blocked by TUBGCP3 at the last position, allowing 13 protafilaments to grow into a microtubule. The gTuRC (via TUBGCP3 and TUBGCP6) interacts with ACTB and MZT1; the interactions form a luminal bridge that stabilizes the initial structure during complex assembly. The gTuRC (via TUBGCP2) interacts with MZT2A/MZT2B and CDK5RAP2 (via CM1 motif); the interactions play a role in gTuRC activation.

The protein resides in the cytoplasm. Its subcellular location is the cytoskeleton. It is found in the microtubule organizing center. The protein localises to the centrosome. Functionally, component of the gamma-tubulin ring complex (gTuRC) which mediates microtubule nucleation. The gTuRC regulates the minus-end nucleation of alpha-beta tubulin heterodimers that grow into microtubule protafilaments, a critical step in centrosome duplication and spindle formation. The polypeptide is Gamma-tubulin complex component 5 (Tubgcp5) (Mus musculus (Mouse)).